Consider the following 388-residue polypeptide: Protein DVU_0534 (388 aa).

The next 10 helical transmembrane spans lie at 10 to 31 (LMTPGNIITGIILVMGLVLTVL), 57 to 78 (LLCGVALAAGGYVTSASCYLFG), 89 to 106 (AITTAFLGYFFVVVALNY), 130 to 144 (EVGLCVATYLTVLFV), 166 to 191 (LTLVLTIFGVVLSTLHQSSLGALFLI), 199 to 222 (LWYSSFLPVFFFISSMVAGLSMVI), 254 to 265 (AASFVLAGYFMI), 291 to 306 (MLGFVALPSFLYALGV), 316 to 328 (FASVLGVLGIVMN), and 354 to 368 (IGISVFIVTSIITVY).

This sequence belongs to the NrfD family.

The protein localises to the cell membrane. In terms of biological role, HMWC (high-molecular-weight cytochrome c), ORF2, ORF3, ORF4, ORF5 and ORF6 in the HMC operon form a transmembrane protein complex that allows electron flow from the periplasmic hydrogenase to the cytoplasmic enzymes that catalyze reduction of sulfates. The sequence is that of Protein DVU_0534 from Nitratidesulfovibrio vulgaris (strain ATCC 29579 / DSM 644 / CCUG 34227 / NCIMB 8303 / VKM B-1760 / Hildenborough) (Desulfovibrio vulgaris).